The primary structure comprises 372 residues: uncharacterized protein (372 aa).

S-adenosyl-L-methionine-binding positions include Asp202 and 227–229 (GDF).

This sequence belongs to the class I-like SAM-binding methyltransferase superfamily. Cation-independent O-methyltransferase family.

This is an uncharacterized protein from Methanocaldococcus jannaschii (strain ATCC 43067 / DSM 2661 / JAL-1 / JCM 10045 / NBRC 100440) (Methanococcus jannaschii).